The sequence spans 155 residues: Large ribosomal subunit protein eL19 (155 aa).

Residues valine 66–glycine 84 show a composition bias toward basic residues. The tract at residues valine 66 to valine 85 is disordered.

Belongs to the eukaryotic ribosomal protein eL19 family. As to quaternary structure, part of the 50S ribosomal subunit.

Binds to the 23S rRNA. The sequence is that of Large ribosomal subunit protein eL19 from Aeropyrum pernix (strain ATCC 700893 / DSM 11879 / JCM 9820 / NBRC 100138 / K1).